The primary structure comprises 647 residues: tRNA uridine 5-carboxymethylaminomethyl modification enzyme MnmG (647 aa).

FAD-binding positions include 22–27 (GAGHAG), Val-134, and Ser-189. Residue 283–297 (GARYCPSIEDKIMRF) participates in NAD(+) binding. Gln-380 serves as a coordination point for FAD.

Belongs to the MnmG family. As to quaternary structure, homodimer. Heterotetramer of two MnmE and two MnmG subunits. It depends on FAD as a cofactor.

It is found in the cytoplasm. In terms of biological role, NAD-binding protein involved in the addition of a carboxymethylaminomethyl (cmnm) group at the wobble position (U34) of certain tRNAs, forming tRNA-cmnm(5)s(2)U34. This Desulfotalea psychrophila (strain LSv54 / DSM 12343) protein is tRNA uridine 5-carboxymethylaminomethyl modification enzyme MnmG.